Reading from the N-terminus, the 294-residue chain is N-acetylmuramic acid 6-phosphate etherase (294 aa).

In terms of domain architecture, SIS spans 54-217 (VIQSFEEEGR…STASMIGVGK (164 aa)). The active-site Proton donor is glutamate 82. Glutamate 113 is a catalytic residue.

This sequence belongs to the GCKR-like family. MurNAc-6-P etherase subfamily. Homodimer.

The enzyme catalyses N-acetyl-D-muramate 6-phosphate + H2O = N-acetyl-D-glucosamine 6-phosphate + (R)-lactate. The protein operates within amino-sugar metabolism; N-acetylmuramate degradation. Specifically catalyzes the cleavage of the D-lactyl ether substituent of MurNAc 6-phosphate, producing GlcNAc 6-phosphate and D-lactate. In Bacillus cereus (strain ZK / E33L), this protein is N-acetylmuramic acid 6-phosphate etherase.